We begin with the raw amino-acid sequence, 371 residues long: Enoyl-[acyl-carrier-protein] reductase [NADH] 2, chloroplastic (371 aa).

A chloroplast-targeting transit peptide spans 1–67 (MGASVTTGLQ…SLNHKRFAVR (67 aa)). Residues glycine 87, tyrosine 94, 151–152 (DA), 198–199 (SL), and leucine 248 contribute to the NAD(+) site. Catalysis depends on proton acceptor residues tyrosine 250 and tyrosine 260. Residues lysine 268 and 298 to 302 (LGSRA) contribute to the NAD(+) site.

Belongs to the short-chain dehydrogenases/reductases (SDR) family. FabI subfamily. As to quaternary structure, homotetramer.

The protein resides in the plastid. Its subcellular location is the chloroplast. The catalysed reaction is a 2,3-saturated acyl-[ACP] + NAD(+) = a (2E)-enoyl-[ACP] + NADH + H(+). It functions in the pathway lipid metabolism; fatty acid biosynthesis. Catalyzes the NAD-dependent reduction of a carbon-carbon double bond in an enoyl moiety that is covalently linked to an acyl carrier protein (ACP). Catalyzes the last reduction step in the de novo synthesis cycle of fatty acids. Involved in the elongation cycle of fatty acids which are used in lipid metabolism. Required for normal plant growth. In Oryza sativa subsp. japonica (Rice), this protein is Enoyl-[acyl-carrier-protein] reductase [NADH] 2, chloroplastic.